We begin with the raw amino-acid sequence, 88 residues long: Small ribosomal subunit protein bS20 (88 aa).

This sequence belongs to the bacterial ribosomal protein bS20 family.

Functionally, binds directly to 16S ribosomal RNA. The protein is Small ribosomal subunit protein bS20 of Blochmanniella floridana.